The following is a 301-amino-acid chain: Probable alpha-L-glutamate ligase 2 (301 aa).

Positions 104-287 constitute an ATP-grasp domain; sequence LQLLSRKSIG…VADKIIQFIE (184 aa). ATP is bound by residues Lys-141, 178-179, Asp-187, and 211-213; these read EY and RSN. Asp-248, Glu-260, and Asn-262 together coordinate Mg(2+). Asp-248, Glu-260, and Asn-262 together coordinate Mn(2+).

This sequence belongs to the RimK family. Mg(2+) is required as a cofactor. The cofactor is Mn(2+).

In Shewanella denitrificans (strain OS217 / ATCC BAA-1090 / DSM 15013), this protein is Probable alpha-L-glutamate ligase 2.